We begin with the raw amino-acid sequence, 231 residues long: Putative cobalt transport protein CbiM 1 (231 aa).

Helical transmembrane passes span 6 to 26, 41 to 61, 79 to 99, 107 to 127, 136 to 156, and 172 to 192; these read GFLP…FLIY, VLPL…VDIP, FFGP…QALL, TLGA…WLVF, VPLG…TYLI, and LTAF…ISII.

The protein belongs to the CbiM family. Forms an energy-coupling factor (ECF) transporter complex composed of an ATP-binding protein (A component, CbiO), a transmembrane protein (T component, CbiQ) and 2 possible substrate-capture proteins (S components, CbiM and CbiN) of unknown stoichimetry.

The protein localises to the cell membrane. The protein operates within cofactor biosynthesis; adenosylcobalamin biosynthesis. In terms of biological role, part of the energy-coupling factor (ECF) transporter complex CbiMNOQ involved in cobalt import. The polypeptide is Putative cobalt transport protein CbiM 1 (Methanocorpusculum labreanum (strain ATCC 43576 / DSM 4855 / Z)).